The following is a 145-amino-acid chain: Prefoldin subunit alpha (145 aa).

This sequence belongs to the prefoldin alpha subunit family. In terms of assembly, heterohexamer of two alpha and four beta subunits.

It is found in the cytoplasm. Functionally, molecular chaperone capable of stabilizing a range of proteins. Seems to fulfill an ATP-independent, HSP70-like function in archaeal de novo protein folding. This chain is Prefoldin subunit alpha, found in Nitrosopumilus maritimus (strain SCM1).